The following is a 505-amino-acid chain: Cytochrome P450 76A2 (505 aa).

Residue C448 participates in heme binding.

Belongs to the cytochrome P450 family. Heme is required as a cofactor.

This Solanum melongena (Eggplant) protein is Cytochrome P450 76A2 (CYP76A2).